We begin with the raw amino-acid sequence, 283 residues long: NADPH-dependent 3-dehydrocapnine reductase (283 aa).

The Proton acceptor role is filled by tyrosine 153.

The protein belongs to the short-chain dehydrogenases/reductases (SDR) family.

The catalysed reaction is 3-oxocapnine + NADPH + H(+) = capnine + NADP(+). It functions in the pathway lipid metabolism. In terms of biological role, reductase involved in the biosynthesis of capnine, a sulfonolipid present in the outer membrane of gliding Bacteroidetes and essential for gliding motility. Catalyzes the reduction of 3-dehydrocapnine to capnine. The protein is NADPH-dependent 3-dehydrocapnine reductase of Ornithobacterium rhinotracheale.